The sequence spans 31 residues: GSIPCGESCVWIPCISSVVGCACKNKVCYKN.

Positions 1–31 form a cross-link, cyclopeptide (Gly-Asn); it reads GSIPCGESCVWIPCISSVVGCACKNKVCYKN. Intrachain disulfides connect Cys-5-Cys-21, Cys-9-Cys-23, and Cys-14-Cys-28.

It belongs to the cyclotide family. Bracelet subfamily. In terms of processing, this is a cyclic peptide.

In terms of biological role, probably participates in a plant defense mechanism. In Melicytus dentatus (Tree violet), this protein is Cyclotide mden-K.